Here is a 91-residue protein sequence, read N- to C-terminus: Probable Fe(2+)-trafficking protein (91 aa).

Belongs to the Fe(2+)-trafficking protein family.

In terms of biological role, could be a mediator in iron transactions between iron acquisition and iron-requiring processes, such as synthesis and/or repair of Fe-S clusters in biosynthetic enzymes. This Polynucleobacter necessarius subsp. necessarius (strain STIR1) protein is Probable Fe(2+)-trafficking protein.